The sequence spans 120 residues: Large ribosomal subunit protein bL19 (120 aa).

This sequence belongs to the bacterial ribosomal protein bL19 family.

Its function is as follows. This protein is located at the 30S-50S ribosomal subunit interface and may play a role in the structure and function of the aminoacyl-tRNA binding site. This chain is Large ribosomal subunit protein bL19, found in Geobacillus kaustophilus (strain HTA426).